The following is a 469-amino-acid chain: Probable acetate kinase (469 aa).

Asn30 contacts Mg(2+). Position 37 (Lys37) interacts with ATP. Arg122 contacts substrate. The Proton donor/acceptor role is filled by Asp179. 239-243 provides a ligand contact to ATP; that stretch reads HLGSG. Glu453 is a Mg(2+) binding site.

This sequence belongs to the acetokinase family. It depends on Mg(2+) as a cofactor.

It carries out the reaction acetate + ATP = acetyl phosphate + ADP. The protein operates within metabolic intermediate biosynthesis; acetyl-CoA biosynthesis; acetyl-CoA from acetate: step 1/2. The sequence is that of Probable acetate kinase from Neurospora crassa (strain ATCC 24698 / 74-OR23-1A / CBS 708.71 / DSM 1257 / FGSC 987).